The sequence spans 79 residues: Cytochrome b (79 aa).

Transmembrane regions (helical) follow at residues 1-7, 31-52, and 67-79; these read TALFLAM, WLIR…YLHI, and WNIG…LTMM. His-37 and His-51 together coordinate heme b.

Belongs to the cytochrome b family. The cytochrome bc1 complex contains 3 respiratory subunits (MT-CYB, CYC1 and UQCRFS1), 2 core proteins (UQCRC1 and UQCRC2) and probably 6 low-molecular weight proteins. It depends on heme b as a cofactor.

Its subcellular location is the mitochondrion inner membrane. Component of the ubiquinol-cytochrome c reductase complex (complex III or cytochrome b-c1 complex) that is part of the mitochondrial respiratory chain. The b-c1 complex mediates electron transfer from ubiquinol to cytochrome c. Contributes to the generation of a proton gradient across the mitochondrial membrane that is then used for ATP synthesis. The sequence is that of Cytochrome b (mt-cyb) from Julidochromis regani (Convict julie).